Consider the following 490-residue polypeptide: Aspartyl/glutamyl-tRNA(Asn/Gln) amidotransferase subunit B (490 aa).

This sequence belongs to the GatB/GatE family. GatB subfamily. In terms of assembly, heterotrimer of A, B and C subunits.

It carries out the reaction L-glutamyl-tRNA(Gln) + L-glutamine + ATP + H2O = L-glutaminyl-tRNA(Gln) + L-glutamate + ADP + phosphate + H(+). The enzyme catalyses L-aspartyl-tRNA(Asn) + L-glutamine + ATP + H2O = L-asparaginyl-tRNA(Asn) + L-glutamate + ADP + phosphate + 2 H(+). Allows the formation of correctly charged Asn-tRNA(Asn) or Gln-tRNA(Gln) through the transamidation of misacylated Asp-tRNA(Asn) or Glu-tRNA(Gln) in organisms which lack either or both of asparaginyl-tRNA or glutaminyl-tRNA synthetases. The reaction takes place in the presence of glutamine and ATP through an activated phospho-Asp-tRNA(Asn) or phospho-Glu-tRNA(Gln). This chain is Aspartyl/glutamyl-tRNA(Asn/Gln) amidotransferase subunit B, found in Methylorubrum extorquens (strain PA1) (Methylobacterium extorquens).